The primary structure comprises 183 residues: UPF0397 protein VFMJ11_1662 (183 aa).

5 helical membrane-spanning segments follow: residues 8-28 (VVVIAIGAALYGIGGLPMFGI), 41-61 (AVLALFSVLYGPIVGFLVGFI), 75-95 (WLTWVLGSGIVGMIIGLFPII), 110-130 (FLIFVVLAFFGNVFGYGTSAF), and 147-167 (LCIIAAGNTFLIAIVGYFILN).

Belongs to the UPF0397 family.

It is found in the cell membrane. This chain is UPF0397 protein VFMJ11_1662, found in Aliivibrio fischeri (strain MJ11) (Vibrio fischeri).